Here is a 315-residue protein sequence, read N- to C-terminus: Kinetochore protein SPC25 homolog (315 aa).

At methionine 1 the chain carries N-acetylmethionine. Positions 57–91 form a coiled coil; it reads TAQSQVELMNLKADLREAEDELVKVLAVKTRKEAR. Residues 261–315 are disordered; sequence APAISFSTDTNMSTPENKRSKVQVNRRQKRGSESPLLAPVSTSATRRSSRFKGKK. Positions 266–275 are enriched in polar residues; sequence FSTDTNMSTP. Positions 280–289 are enriched in basic residues; that stretch reads SKVQVNRRQK.

Belongs to the SPC25 family. As to quaternary structure, component of the NDC80 complex, which consists of NDC80, NUF2, SPC24 and SPC25.

The protein resides in the chromosome. The protein localises to the centromere. Functionally, acts as a component of the essential kinetochore-associated NDC80 complex, which is required for chromosome segregation and spindle checkpoint activity to ensure proper cell division. This Arabidopsis thaliana (Mouse-ear cress) protein is Kinetochore protein SPC25 homolog.